Reading from the N-terminus, the 197-residue chain is dTTP/UTP pyrophosphatase (197 aa).

Asp70 acts as the Proton acceptor in catalysis.

It belongs to the Maf family. YhdE subfamily. A divalent metal cation serves as cofactor.

Its subcellular location is the cytoplasm. The enzyme catalyses dTTP + H2O = dTMP + diphosphate + H(+). It catalyses the reaction UTP + H2O = UMP + diphosphate + H(+). Nucleoside triphosphate pyrophosphatase that hydrolyzes dTTP and UTP. May have a dual role in cell division arrest and in preventing the incorporation of modified nucleotides into cellular nucleic acids. This is dTTP/UTP pyrophosphatase (yceF2) from Shigella sonnei (strain Ss046).